Reading from the N-terminus, the 925-residue chain is Nonribosomal peptide synthetase apvA (925 aa).

Residues 15 to 436 (AREDSGHVVV…TGRAKENMII (422 aa)) form an adenylation (A) domain region. Residues 564-644 (EPQNDLEKTL…DLATALEKLQ (81 aa)) form the Carrier domain. Serine 601 is subject to O-(pantetheine 4'-phosphoryl)serine. The segment at 663 to 909 (PLWLVHPGAG…HYSMIGPDHV (247 aa)) is thioesterase (TE) domain.

This sequence belongs to the NRP synthetase family. As to expression, apvA specifically produces aspulvinone E in hyphea, in contrast to melA which produces aspulvinone E in conidia where it is converted to UV-protective Asp-melanin.

It catalyses the reaction 2 3-(4-hydroxyphenyl)pyruvate + AH2 + 2 ATP + O2 = aspulvinone E + A + 2 AMP + CO2 + 2 diphosphate + H2O + H(+). It functions in the pathway secondary metabolite biosynthesis. In terms of biological role, nonribosomal peptide synthetase; part of the gene cluster that mediates the biosynthesis of aspulvinones. The nonribosomal peptide synthetase apvA is responsible for the production of aspulvinone E, the core structure of aspulvinones. ApvA first activates 4-hydroxyphenylpyruvate (HPPA) through its A domain to AMP-HPPA. The HPPA unit is then loaded to the T domain and eventually transferred to the TE domain. Upon loading of another HPPA unit to the T domain, the TE domain promotes the enolate formation on the unit attached. The next step involves head to tail Claisen condensation, followed by the keto-enol tautermerization and a nucleophilic attack on the carbonyl carbon to yield the furanone partial structure. A spontaneous oxidation at the beta-carbon of the thioester might occur in aerobic condition. The TE domain then catalyzes the hydrolysis of the thioester, followed by spontaneous decarboxylation, dehydroxylation and keto-enol tautermerization to give the aspulvinone core. Aspulvinone E is highly unstable and converted to isoaspulvinone E in the presence of light. The structural diversity of the aspulvinones suggests that other tailoring enzymes are involved and have still to be identified. The chain is Nonribosomal peptide synthetase apvA from Aspergillus terreus (strain NIH 2624 / FGSC A1156).